Consider the following 354-residue polypeptide: C-C chemokine receptor type 5 (354 aa).

At 1–32 (MDFQGSIPTYIYDIDYSMSAPCQKVNVKQIAA) the chain is on the extracellular side. S6 carries O-linked (GalNAc...) serine glycosylation. Sulfotyrosine is present on residues Y10 and Y16. 2 disulfides stabilise this stretch: C22-C271 and C103-C180. Residues 33 to 60 (QLLPPLYSLVFIFGFVGNMMVFLILISC) form a helical membrane-spanning segment. Residues 61-70 (KKLKSMTDIY) are Cytoplasmic-facing. A helical transmembrane segment spans residues 71-91 (LFNLAISDLLFLLTLPFWAHY). Over 92–104 (AANEWVFGNIMCK) the chain is Extracellular. The chain crosses the membrane as a helical span at residues 105 to 126 (LFTGIYHIGYFGGIFFIILLTI). The Cytoplasmic segment spans residues 127-143 (DRYLAIVHAVFAIKART). Residues 144–168 (VNFGVITSVVTWVVAVFVSLPEIIF) traverse the membrane as a helical segment. Residues 169–200 (MRSQKEGSHYTCSPHFLHIQYRFWKHFQTLKM) lie on the Extracellular side of the membrane. Residues 201–220 (VILSLILPLLVMVICYSGIL) traverse the membrane as a helical segment. The Cytoplasmic segment spans residues 221–237 (NTLFRCRNEKKRHRAVR). Residues 238–262 (LIFAIMIVYFLFWTPYNIVLLLTTF) form a helical membrane-spanning segment. Residues 263–279 (QEYFGLNNCSSSNRLDQ) are Extracellular-facing. Residues 280–303 (AMQVTETLGMTHCCLNPVIYAFVG) form a helical membrane-spanning segment. The Cytoplasmic portion of the chain corresponds to 304 to 354 (EKFRNYLSVFFRKHIVKRFCKHCSIFQQVNPDRVSSVYTRSTGEQEVSTGL). 2 S-palmitoyl cysteine lipidation sites follow: C323 and C326. A phosphoserine; by BARK1 mark is found at S338, S339, S344, and S351.

Belongs to the G-protein coupled receptor 1 family. As to quaternary structure, interacts with PRAF2. Efficient ligand binding to CCL3/MIP-1alpha and CCL4/MIP-1beta requires sulfation, O-glycosylation and sialic acid modifications. Glycosylation on Ser-6 is required for efficient binding of CCL4. Interacts with GRK2. Interacts with ARRB1 and ARRB2. Interacts with CNIH4. Interacts with S100A4; this interaction stimulates T-lymphocyte chemotaxis. Sulfated on at least 2 of the N-terminal tyrosines. Sulfation is required for efficient binding of the chemokines, CCL3 and CCL4. In terms of processing, O-glycosylated, but not N-glycosylated. Ser-6 appears to be the major site. Also sialylated glycans present which contribute to chemokine binding. Ser-17 may also be glycosylated and, if so, with small moieties such as a T-antigen. Post-translationally, palmitoylation in the C-terminal is important for cell surface expression. Phosphorylation on serine residues in the C-terminal is stimulated by binding CC chemokines especially by APO-RANTES.

The protein localises to the cell membrane. Its function is as follows. Receptor for a number of inflammatory CC-chemokines including CCL3/MIP-1-alpha, CCL4/MIP-1-beta and RANTES and subsequently transduces a signal by increasing the intracellular calcium ion level. May play a role in the control of granulocytic lineage proliferation or differentiation. Participates in T-lymphocyte migration to the infection site by acting as a chemotactic receptor. In Rattus norvegicus (Rat), this protein is C-C chemokine receptor type 5 (Ccr5).